The primary structure comprises 405 residues: Argininosuccinate synthase (405 aa).

11–19 (AYSGGLDTS) contributes to the ATP binding site. Tyr-90 contacts L-citrulline. Gly-119 provides a ligand contact to ATP. The L-aspartate site is built by Thr-121, Asn-125, and Asp-126. Residue Asn-125 coordinates L-citrulline. L-citrulline-binding residues include Arg-129, Ser-178, Ser-187, Glu-263, and Tyr-275.

This sequence belongs to the argininosuccinate synthase family. Type 1 subfamily. Homotetramer.

Its subcellular location is the cytoplasm. The enzyme catalyses L-citrulline + L-aspartate + ATP = 2-(N(omega)-L-arginino)succinate + AMP + diphosphate + H(+). Its pathway is amino-acid biosynthesis; L-arginine biosynthesis; L-arginine from L-ornithine and carbamoyl phosphate: step 2/3. The sequence is that of Argininosuccinate synthase from Legionella pneumophila subsp. pneumophila (strain Philadelphia 1 / ATCC 33152 / DSM 7513).